The primary structure comprises 26 residues: Muscarinic toxin-like protein 1 (26 aa).

Belongs to the three-finger toxin family. Short-chain subfamily. Orphan group VIII (haditoxin) sub-subfamily. As to quaternary structure, homodimer; non-covalently linked. As to expression, expressed by the venom gland.

Its subcellular location is the secreted. Antagonist of muscle and neuronal nicotinic acetylcholine receptors (nAChR) with highest affinity for neuronal alpha-7/CHRNA7 nAChRs. In Naja naja (Indian cobra), this protein is Muscarinic toxin-like protein 1.